The primary structure comprises 881 residues: Probable intermembrane transport protein HI_1672 (881 aa).

The helical transmembrane segment at 30 to 49 (FWLLPFIALCIGAILFFQIV) threads the bilayer.

Belongs to the PqiB family.

The protein resides in the cell inner membrane. The protein is Probable intermembrane transport protein HI_1672 of Haemophilus influenzae (strain ATCC 51907 / DSM 11121 / KW20 / Rd).